The chain runs to 361 residues: UDP-3-O-acylglucosamine N-acyltransferase (361 aa).

His253 serves as the catalytic Proton acceptor.

Belongs to the transferase hexapeptide repeat family. LpxD subfamily. As to quaternary structure, homotrimer.

It catalyses the reaction a UDP-3-O-[(3R)-3-hydroxyacyl]-alpha-D-glucosamine + a (3R)-hydroxyacyl-[ACP] = a UDP-2-N,3-O-bis[(3R)-3-hydroxyacyl]-alpha-D-glucosamine + holo-[ACP] + H(+). The protein operates within bacterial outer membrane biogenesis; LPS lipid A biosynthesis. In terms of biological role, catalyzes the N-acylation of UDP-3-O-acylglucosamine using 3-hydroxyacyl-ACP as the acyl donor. Is involved in the biosynthesis of lipid A, a phosphorylated glycolipid that anchors the lipopolysaccharide to the outer membrane of the cell. This is UDP-3-O-acylglucosamine N-acyltransferase from Burkholderia mallei (strain ATCC 23344).